A 330-amino-acid polypeptide reads, in one-letter code: DNA-directed RNA polymerase subunit alpha (330 aa).

Residues 1–236 (MQGSVTEFLK…EQLDAFVDLR (236 aa)) form an alpha N-terminal domain (alpha-NTD) region. Residues 250 to 330 (FDPILLRPVD…NWPPASIAED (81 aa)) are alpha C-terminal domain (alpha-CTD).

This sequence belongs to the RNA polymerase alpha chain family. Homodimer. The RNAP catalytic core consists of 2 alpha, 1 beta, 1 beta' and 1 omega subunit. When a sigma factor is associated with the core the holoenzyme is formed, which can initiate transcription.

It carries out the reaction RNA(n) + a ribonucleoside 5'-triphosphate = RNA(n+1) + diphosphate. Its function is as follows. DNA-dependent RNA polymerase catalyzes the transcription of DNA into RNA using the four ribonucleoside triphosphates as substrates. This Vibrio parahaemolyticus serotype O3:K6 (strain RIMD 2210633) protein is DNA-directed RNA polymerase subunit alpha.